Consider the following 176-residue polypeptide: Large ribosomal subunit protein uL10 (176 aa).

The protein belongs to the universal ribosomal protein uL10 family. Part of the ribosomal stalk of the 50S ribosomal subunit. The N-terminus interacts with L11 and the large rRNA to form the base of the stalk. The C-terminus forms an elongated spine to which L12 dimers bind in a sequential fashion forming a multimeric L10(L12)X complex.

Functionally, forms part of the ribosomal stalk, playing a central role in the interaction of the ribosome with GTP-bound translation factors. This Coprothermobacter proteolyticus (strain ATCC 35245 / DSM 5265 / OCM 4 / BT) protein is Large ribosomal subunit protein uL10.